The following is a 139-amino-acid chain: Prefoldin subunit alpha (139 aa).

This sequence belongs to the prefoldin subunit alpha family. As to quaternary structure, heterohexamer of two alpha and four beta subunits.

Its subcellular location is the cytoplasm. Its function is as follows. Molecular chaperone capable of stabilizing a range of proteins. Seems to fulfill an ATP-independent, HSP70-like function in archaeal de novo protein folding. The polypeptide is Prefoldin subunit alpha (Picrophilus torridus (strain ATCC 700027 / DSM 9790 / JCM 10055 / NBRC 100828 / KAW 2/3)).